The sequence spans 372 residues: MKYDLIIIGSGSVGAAAGYYATRAGLNVLMTDAHMPPHQHGSHHGDTRLIRHAYGEGEKYVPLVLRAQMLWDELSRHNEDDPIFVRSGVINLGPADSAFLANVAHSAEQWQLNVEQLDAQGIMARWPEIRVPDNYIGLFETDSGFLRSELAIKTWIQLAKEAGCAQLFNCPVTEIRHDDDGVTIETADGEYQAKKAIVCAGTWVKDLLPELPVQPVRKVFAWYQADGRYSVKNKFPAFTGELPNGDQYYGFPAENDALKIGKHNGGQVIHSADERVPFAEVVSDGSEAFPFLRNVLPGIGCCLYGAACTYDNSPDEDFIIDTLPAHDNTLLITGLSGHGFKFASVLGEIAADFAQDKKSDFDLTPFRLSRFQ.

4–34 (DLIIIGSGSVGAAAGYYATRAGLNVLMTDAH) provides a ligand contact to FAD. An S-8alpha-FAD cysteine modification is found at Cys308.

This sequence belongs to the MSOX/MTOX family. MTOX subfamily. As to quaternary structure, monomer. It depends on FAD as a cofactor.

It carries out the reaction N(alpha)-methyl-L-tryptophan + O2 + H2O = L-tryptophan + formaldehyde + H2O2. Catalyzes the oxidative demethylation of N-methyl-L-tryptophan. The protein is N-methyl-L-tryptophan oxidase of Escherichia coli (strain SMS-3-5 / SECEC).